A 772-amino-acid chain; its full sequence is Chondroitin sulfate glucuronyltransferase (772 aa).

Over 1 to 6 (MRLSSL) the chain is Cytoplasmic. The helical; Signal-anchor for type II membrane protein transmembrane segment at 7–29 (LALLRPALPLILGLSLGCSLSLL) threads the bilayer. Residues 30-772 (RVSWIQGEGE…LFEQEQANST (743 aa)) are Lumenal-facing. N-linked (GlcNAc...) asparagine glycans are attached at residues asparagine 121 and asparagine 342. Positions 629 to 662 (ALSPQRSPPGPPGAGPDPPSPPGADPSRGAPIGG) are disordered. Residues 634–652 (RSPPGPPGAGPDPPSPPGA) show a composition bias toward pro residues.

Belongs to the chondroitin N-acetylgalactosaminyltransferase family. As to expression, ubiquitous. Highly expressed in placenta, small intestine and pancreas.

It localises to the golgi apparatus. Its subcellular location is the golgi stack membrane. It carries out the reaction 3-O-(beta-D-GalNAc-(1-&gt;4)-beta-D-GlcA-(1-&gt;3)-beta-D-Gal-(1-&gt;3)-beta-D-Gal-(1-&gt;4)-beta-D-Xyl)-L-seryl-[protein] + UDP-alpha-D-glucuronate = 3-O-(beta-D-GlcA-(1-&gt;3)-beta-D-GalNAc-(1-&gt;4)-beta-D-GlcA-(1-&gt;3)-beta-D-Gal-(1-&gt;3)-beta-D-Gal-(1-&gt;4)-beta-D-Xyl)-L-seryl-[protein] + UDP + H(+). The enzyme catalyses 3-O-{[beta-D-GalNAc-(1-&gt;4)-beta-D-GlcA-(1-&gt;3)](n)-beta-D-GalNAc-(1-&gt;4)-beta-D-GlcA-(1-&gt;3)-beta-D-Gal-(1-&gt;3)-beta-D-Gal-(1-&gt;4)-beta-D-Xyl}-L-seryl-[protein] + UDP-alpha-D-glucuronate = 3-O-{beta-D-GlcA-(1-&gt;3)-[beta-D-GalNAc-(1-&gt;4)-beta-D-GlcA-(1-&gt;3)](n)-beta-D-GalNAc-(1-&gt;4)-beta-D-GlcA-(1-&gt;3)-beta-D-Gal-(1-&gt;3)-beta-D-Gal-(1-&gt;4)-beta-D-Xyl}-L-seryl-[protein] + UDP + H(+). In terms of biological role, transfers glucuronic acid (GlcUA) from UDP-GlcUA to N-acetylgalactosamine residues on the non-reducing end of the elongating chondroitin polymer. Has no N-acetylgalactosaminyltransferase activity. The polypeptide is Chondroitin sulfate glucuronyltransferase (CHPF2) (Homo sapiens (Human)).